The primary structure comprises 355 residues: Epoxide hydrolase 2 (355 aa).

The 246-residue stretch at Val-78–Gln-323 folds into the AB hydrolase-1 domain. The active-site Nucleophile is Asp-152. Tyr-263 functions as the Proton donor in the catalytic mechanism. Catalysis depends on His-319, which acts as the Proton acceptor.

Belongs to the AB hydrolase superfamily. Epoxide hydrolase family.

It carries out the reaction an epoxide + H2O = an ethanediol. The protein operates within lipid metabolism. In terms of biological role, catalyzes the hydrolysis of epoxide-containing fatty acids. Active in vitro against trans-1,3-diphenylpropene oxide (t-DPPO), epoxyeicosatrienoic acids (EETs) including 8,9-EET, 11,12-EET and 14,15-EET and the linoleic acid metabolites 12,13-epoxy-9-octadecenoate (12,13-EpOME) and 9,10-epoxy-12-octadecenoate (9,10-EpOME). In Caenorhabditis elegans, this protein is Epoxide hydrolase 2.